We begin with the raw amino-acid sequence, 443 residues long: Signal recognition particle 54 kDa protein (443 aa).

GTP is bound by residues 104 to 111, 184 to 188, and 242 to 245; these read GLQGSGKT, DTAGR, and TKLD.

The protein belongs to the GTP-binding SRP family. SRP54 subfamily. In terms of assembly, part of the signal recognition particle protein translocation system, which is composed of SRP and FtsY. Archaeal SRP consists of a 7S RNA molecule of 300 nucleotides and two protein subunits: SRP54 and SRP19.

The protein localises to the cytoplasm. The enzyme catalyses GTP + H2O = GDP + phosphate + H(+). Functionally, involved in targeting and insertion of nascent membrane proteins into the cytoplasmic membrane. Binds to the hydrophobic signal sequence of the ribosome-nascent chain (RNC) as it emerges from the ribosomes. The SRP-RNC complex is then targeted to the cytoplasmic membrane where it interacts with the SRP receptor FtsY. The chain is Signal recognition particle 54 kDa protein from Methanosarcina mazei (strain ATCC BAA-159 / DSM 3647 / Goe1 / Go1 / JCM 11833 / OCM 88) (Methanosarcina frisia).